A 339-amino-acid chain; its full sequence is UDP-3-O-acylglucosamine N-acyltransferase (339 aa).

The Proton acceptor role is filled by His-251.

The protein belongs to the transferase hexapeptide repeat family. LpxD subfamily. As to quaternary structure, homotrimer.

The enzyme catalyses a UDP-3-O-[(3R)-3-hydroxyacyl]-alpha-D-glucosamine + a (3R)-hydroxyacyl-[ACP] = a UDP-2-N,3-O-bis[(3R)-3-hydroxyacyl]-alpha-D-glucosamine + holo-[ACP] + H(+). The protein operates within bacterial outer membrane biogenesis; LPS lipid A biosynthesis. Functionally, catalyzes the N-acylation of UDP-3-O-acylglucosamine using 3-hydroxyacyl-ACP as the acyl donor. Is involved in the biosynthesis of lipid A, a phosphorylated glycolipid that anchors the lipopolysaccharide to the outer membrane of the cell. The protein is UDP-3-O-acylglucosamine N-acyltransferase of Paramagnetospirillum magneticum (strain ATCC 700264 / AMB-1) (Magnetospirillum magneticum).